Reading from the N-terminus, the 499-residue chain is Ent-kaurenoic acid oxidase 1 (499 aa).

The helical transmembrane segment at 5-25 (AWWAVAAVVAALAVVALDAAV) threads the bilayer. Heme is bound at residue Cys443.

Belongs to the cytochrome P450 family. The cofactor is heme.

The protein localises to the endoplasmic reticulum membrane. The catalysed reaction is ent-kaur-16-en-19-oate + 3 reduced [NADPH--hemoprotein reductase] + 3 O2 = gibberellin A12 + 3 oxidized [NADPH--hemoprotein reductase] + 4 H2O + 4 H(+). The enzyme catalyses ent-kaur-16-en-19-oate + reduced [NADPH--hemoprotein reductase] + O2 = ent-7alpha-hydroxykaur-16-en-19-oate + oxidized [NADPH--hemoprotein reductase] + H2O + H(+). It catalyses the reaction ent-7alpha-hydroxykaur-16-en-19-oate + reduced [NADPH--hemoprotein reductase] + O2 = gibberellin A12 aldehyde + oxidized [NADPH--hemoprotein reductase] + 2 H2O + H(+). It carries out the reaction gibberellin A12 aldehyde + reduced [NADPH--hemoprotein reductase] + O2 = gibberellin A12 + oxidized [NADPH--hemoprotein reductase] + H2O + 2 H(+). It participates in plant hormone biosynthesis; gibberellin biosynthesis. In terms of biological role, catalyzes three successive oxidations of ent-kaurenoic acid giving gibberellin 12 (GA12), a key step in gibberellins (GAs) biosynthesis. GAs, which are involved many processes, including stem elongation, play a central role in plant development. This Hordeum vulgare (Barley) protein is Ent-kaurenoic acid oxidase 1.